Consider the following 175-residue polypeptide: NADH-quinone oxidoreductase subunit I (175 aa).

4Fe-4S ferredoxin-type domains lie at 69-98 (KRDE…IEAA) and 115-144 (KKFE…LDGP). Residues cysteine 78, cysteine 81, cysteine 84, cysteine 88, cysteine 124, cysteine 127, cysteine 130, and cysteine 134 each coordinate [4Fe-4S] cluster.

This sequence belongs to the complex I 23 kDa subunit family. As to quaternary structure, NDH-1 is composed of 14 different subunits. Subunits NuoA, H, J, K, L, M, N constitute the membrane sector of the complex. [4Fe-4S] cluster is required as a cofactor.

The protein localises to the cell inner membrane. The catalysed reaction is a quinone + NADH + 5 H(+)(in) = a quinol + NAD(+) + 4 H(+)(out). NDH-1 shuttles electrons from NADH, via FMN and iron-sulfur (Fe-S) centers, to quinones in the respiratory chain. The immediate electron acceptor for the enzyme in this species is believed to be ubiquinone. Couples the redox reaction to proton translocation (for every two electrons transferred, four hydrogen ions are translocated across the cytoplasmic membrane), and thus conserves the redox energy in a proton gradient. The sequence is that of NADH-quinone oxidoreductase subunit I from Leptospira interrogans serogroup Icterohaemorrhagiae serovar Lai (strain 56601).